The sequence spans 372 residues: 3-galactosyl-N-acetylglucosaminide 4-alpha-L-fucosyltransferase FUT3 (372 aa).

The Cytoplasmic segment spans residues 1–15; it reads MDPLGAAKPQWPWRR. Residues 16-34 form a helical; Signal-anchor for type II membrane protein membrane-spanning segment; sequence CLAALLFQLLVAVCFFSYL. At 35–372 the chain is on the lumenal side; it reads RVSRDDATGS…TMRSIAAWFT (338 aa). The tract at residues 40–69 is disordered; that stretch reads DATGSPRPGLMAVEPVTGAPSGSSRQDTTP. 2 N-linked (GlcNAc...) asparagine glycosylation sites follow: Asn165 and Asn196.

It belongs to the glycosyltransferase 10 family. Post-translationally, glycosylated.

The protein resides in the golgi apparatus. It is found in the golgi stack membrane. It carries out the reaction a beta-D-galactosyl-(1-&gt;3)-N-acetyl-beta-D-glucosaminyl derivative + GDP-beta-L-fucose = a beta-D-galactosyl-(1-&gt;3)-[alpha-L-fucosyl-(1-&gt;4)]-N-acetyl-beta-D-glucosaminyl derivative + GDP + H(+). It catalyses the reaction an N-acetyl-alpha-neuraminyl-(2-&gt;3)-beta-D-galactosyl-(1-&gt;4)-N-acetyl-beta-D-glucosaminyl derivative + GDP-beta-L-fucose = an alpha-Neu5Ac-(2-&gt;3)-beta-D-Gal-(1-&gt;4)-[alpha-L-Fuc-(1-&gt;3)]-beta-D-GlcNAc derivative + GDP + H(+). The catalysed reaction is a beta-D-galactosyl-(1-&gt;4)-N-acetyl-beta-D-glucosaminyl derivative + GDP-beta-L-fucose = a beta-D-galactosyl-(1-&gt;4)-[alpha-L-fucosyl-(1-&gt;3)]-N-acetyl-beta-D-glucosaminyl derivative + GDP + H(+). The enzyme catalyses an alpha-Neu5Ac-(2-&gt;3)-beta-D-Gal-(1-&gt;4)-beta-D-GlcNAc-(1-&gt;3)-beta-D-Gal-(1-&gt;4)-[alpha-L-Fuc-(1-&gt;3)]-beta-D-GlcNAc derivative + GDP-beta-L-fucose = an alpha-Neu5Ac-(2-&gt;3)-beta-D-Gal-(1-&gt;4)-[alpha-L-Fuc-(1-&gt;3)]-beta-D-GlcNAc-(1-&gt;3)-beta-D-Gal-(1-&gt;4)-[alpha-L-Fuc-(1-&gt;3)]-beta-D-GlcNAc derivative + GDP + H(+). It carries out the reaction Lc4Cer + GDP-beta-L-fucose = a lactoside III(4)-a-Fuc-Lc4Cer + GDP + H(+). It catalyses the reaction a beta-D-Gal-(1-&gt;3)-beta-D-GlcNAc-(1-&gt;3)-beta-D-Gal-(1-&gt;4)-beta-D-Glc-(1&lt;-&gt;1')-Cer(d18:1(4E)) + GDP-beta-L-fucose = a III(4)-a-Fuc-Lc4Cer(d18:1(4E)) + GDP + H(+). The catalysed reaction is N-acetyl-alpha-neuraminosyl-(2-&gt;3)-beta-D-galactosyl-(1-&gt;3)-[N-acetyl-alpha-neuraminosyl-(2-&gt;6)]-N-acetyl-beta-D-glucosaminyl-(1-&gt;3)-beta-D-galactosyl-(1-&gt;4)-beta-D-glucosyl-(1&lt;-&gt;1')-N-acyl-sphing-4-enine + GDP-beta-L-fucose = N-acetyl-alpha-neuraminosyl-(2-&gt;3)-beta-D-galactosyl-(1-&gt;3)-alpha-L-fucosyl-(1-&gt;4)-[N-acetyl-alpha-neuraminosyl-(2-&gt;6)-N-acetyl-beta-D-glucosaminyl-(1-&gt;3)]-beta-D-galactosyl-(1-&gt;4)-beta-D-glucosyl-(1&lt;-&gt;1')-N-acyl-sphing-4-enine + GDP + H(+). The enzyme catalyses N-acetyl-alpha-neuraminosyl-(2-&gt;3)-beta-D-galactosyl-(1-&gt;3)-N-acetyl-beta-D-glucosaminyl-(1-&gt;3)-beta-D-galactosyl-(1-&gt;4)-beta-D-glucosyl-(1&lt;-&gt;1')-N-acyl-sphing-4-enine + GDP-beta-L-fucose = N-acetyl-alpha-neuraminosyl-(2-&gt;3)-beta-D-galactosyl-(1-&gt;3)-alpha-L-fucosyl-(1-&gt;4)-[N-acetyl-beta-D-glucosaminyl-(1-&gt;3)]-beta-D-galactosyl-(1-&gt;4)-beta-D-glucosyl-(1&lt;-&gt;1')-N-acyl-sphing-4-enine + GDP + H(+). It carries out the reaction beta-D-galactosyl-(1-&gt;3)-N-acetyl-D-glucosamine + GDP-beta-L-fucose = beta-D-galactosyl-(1-&gt;3)-[alpha-L-fucosyl-(1-&gt;4)]-N-acetyl-D-glucosamine + GDP + H(+). It catalyses the reaction alpha-L-Fuc-(1-&gt;2)-beta-D-Gal-(1-&gt;3)-D-GlcNAc + GDP-beta-L-fucose = alpha-L-Fuc-(1-&gt;2)-beta-D-Gal-(1-&gt;3)-[alpha-L-Fuc-(1-&gt;4)]-D-GlcNAc + GDP + H(+). The catalysed reaction is alpha-L-Fuc-(1-&gt;2)-beta-D-Gal-(1-&gt;4)-D-GlcNAc + GDP-beta-L-fucose = alpha-L-Fuc-(1-&gt;2)-beta-D-Gal-(1-&gt;4)-[alpha-L-Fuc-(1-&gt;3)]-D-GlcNAc + GDP + H(+). The enzyme catalyses beta-D-galactosyl-(1-&gt;4)-N-acetyl-D-glucosamine + GDP-beta-L-fucose = beta-D-galactosyl-(1-&gt;4)-[alpha-L-fucosyl-(1-&gt;3)]-N-acetyl-D-glucosamine + GDP + H(+). It carries out the reaction lactose + GDP-beta-L-fucose = beta-D-galactosyl-(1-&gt;4)-[alpha-L-fucosyl-(1-&gt;3)]-D-glucose + GDP + H(+). It catalyses the reaction an alpha-Neu5Ac-(2-&gt;3)-beta-D-Gal-(1-&gt;3)-D-GlcNAc derivative + GDP-beta-L-fucose = an alpha-Neu5Ac-(2-&gt;3)-beta-D-Gal-(1-&gt;3)-[alpha-L-Fuc-(1-&gt;4)]-beta-D-GlcNAc derivative + GDP + H(+). It functions in the pathway protein modification; protein glycosylation. Functionally, catalyzes the transfer of L-fucose, from a guanosine diphosphate-beta-L-fucose, to both the subterminal N-acetyl glucosamine (GlcNAc) of type 1 chain (beta-D-Gal-(1-&gt;3)-beta-D-GlcNAc) glycolipids and oligosaccharides via an alpha(1,4) linkage, and the subterminal glucose (Glc) or GlcNAc of type 2 chain (beta-D-Gal-(1-&gt;4)-beta-D-GlcNAc) oligosaccharides via an alpha(1,3) linkage, independently of the presence of terminal alpha-L-fucosyl-(1,2) moieties on the terminal galactose of these acceptors and participates in the blood groups Lewis determination and expression of Lewis a (Le(a)), lewis b (Le(b)), Lewis x/SSEA-1 (Le(x)) and lewis y (Le(y)) antigens. Also catalyzes the transfer of L-fucose to subterminal GlcNAc of sialyl- and disialyl-lactotetraosylceramide to produce sialyl Lewis a (sLe(a)) and disialyl Lewis a via an alpha(1,4) linkage and therefore may regulate cell surface sialyl Lewis a expression and consequently regulates adhesive properties to E-selectin, cell proliferation and migration. Catalyzes the transfer of an L-fucose to 3'-sialyl-N-acetyllactosamine by an alpha(1,3) linkage, which allows the formation of sialyl-Lewis x structure and therefore may regulate the sialyl-Lewis x surface antigen expression and consequently adhesive properties to E-selectin. Prefers type 1 chain over type 2 acceptors. Type 1 tetrasaccharide is a better acceptor than type 1 disaccharide suggesting that a beta anomeric configuration of GlcNAc in the substrate is preferred. Lewis-positive (Le(+)) individuals have an active enzyme while Lewis-negative (Le(-)) individuals have an inactive enzyme. This is 3-galactosyl-N-acetylglucosaminide 4-alpha-L-fucosyltransferase FUT3 from Pan troglodytes (Chimpanzee).